The following is a 772-amino-acid chain: Uracil catabolism protein 2 (772 aa).

The disordered stretch occupies residues 1–70 (MDINSNASVS…KKPRKKRKTF (70 aa)). Basic and acidic residues predominate over residues 39–51 (HPEDSARAKERSE). A compositionally biased stretch (basic residues) spans 59–69 (GNKKPRKKRKT). The zn(2)-C6 fungal-type DNA-binding region spans 72–101 (CDTCRRVKTRCDFEPFIGKCYRCNVLQLDC).

The protein belongs to the URC2 family.

The protein resides in the cytoplasm. Its subcellular location is the nucleus. Its function is as follows. Probable transcriptional activator involved in uracil catabolism. In Saccharomyces cerevisiae (strain ATCC 204508 / S288c) (Baker's yeast), this protein is Uracil catabolism protein 2 (URC2).